The primary structure comprises 155 residues: Ribosomal RNA large subunit methyltransferase H (155 aa).

Residues Leu-72, Gly-103, and 122–127 contribute to the S-adenosyl-L-methionine site; that span reads LGRMVW.

It belongs to the RNA methyltransferase RlmH family. Homodimer.

It is found in the cytoplasm. It carries out the reaction pseudouridine(1915) in 23S rRNA + S-adenosyl-L-methionine = N(3)-methylpseudouridine(1915) in 23S rRNA + S-adenosyl-L-homocysteine + H(+). Its function is as follows. Specifically methylates the pseudouridine at position 1915 (m3Psi1915) in 23S rRNA. In Cereibacter sphaeroides (strain ATCC 17029 / ATH 2.4.9) (Rhodobacter sphaeroides), this protein is Ribosomal RNA large subunit methyltransferase H.